We begin with the raw amino-acid sequence, 238 residues long: dITP/XTP pyrophosphatase (238 aa).

Substrate is bound at residue 7-12 (SANQHK). The active-site Proton acceptor is Asp89. Asp89 contacts Mg(2+). Substrate contacts are provided by residues Ser90, 191 to 194 (FGYD), Lys217, and 222 to 223 (HR).

It belongs to the HAM1 NTPase family. As to quaternary structure, homodimer. It depends on Mg(2+) as a cofactor.

The enzyme catalyses XTP + H2O = XMP + diphosphate + H(+). It catalyses the reaction dITP + H2O = dIMP + diphosphate + H(+). The catalysed reaction is ITP + H2O = IMP + diphosphate + H(+). In terms of biological role, pyrophosphatase that catalyzes the hydrolysis of nucleoside triphosphates to their monophosphate derivatives, with a high preference for the non-canonical purine nucleotides XTP (xanthosine triphosphate), dITP (deoxyinosine triphosphate) and ITP. Seems to function as a house-cleaning enzyme that removes non-canonical purine nucleotides from the nucleotide pool, thus preventing their incorporation into DNA/RNA and avoiding chromosomal lesions. The protein is dITP/XTP pyrophosphatase of Helicobacter hepaticus (strain ATCC 51449 / 3B1).